Reading from the N-terminus, the 648-residue chain is Probable ATP-dependent RNA helicase DDX43 (648 aa).

Residues 1–60 (MSHHGGAPKASTWVVASRRSSTVSRAPERRPAEELNRTGPEGYSVGRGGRWRGTSRPPEA) are disordered. Low complexity predominate over residues 10–25 (ASTWVVASRRSSTVSR). Over residues 26-36 (APERRPAEELN) the composition is skewed to basic and acidic residues. One can recognise a KH domain in the interval 67-128 (ELPLCFALKS…AMQTKAKAVI (62 aa)). Residues 242 to 270 (TFDDAFQCYPEVMENIKKAGFQKPTPIQS) carry the Q motif motif. One can recognise a Helicase ATP-binding domain in the interval 273-448 (WPIVLQGIDL…QSYLKEPMIV (176 aa)). Residue 286 to 293 (AQTGTGKT) coordinates ATP. A DEAD box motif is present at residues 396 to 399 (DEAD). The Helicase C-terminal domain maps to 460-621 (SVKQNIIVTT…SIPEELVSMA (162 aa)). The span at 628–641 (QQKREMERKMERPQ) shows a compositional bias: basic and acidic residues. Residues 628 to 648 (QQKREMERKMERPQGRPKKFH) form a disordered region.

This sequence belongs to the DEAD box helicase family. Expressed in testis. Expressed in many tumors of various histological types at a level that is 100-fold higher than the level observed in normal tissues except testis.

It catalyses the reaction ATP + H2O = ADP + phosphate + H(+). This chain is Probable ATP-dependent RNA helicase DDX43 (DDX43), found in Homo sapiens (Human).